Consider the following 322-residue polypeptide: Ferredoxin--NADP reductase (322 aa).

Serine 14, aspartate 33, glutamine 41, tyrosine 46, alanine 86, phenylalanine 120, aspartate 278, and serine 319 together coordinate FAD.

This sequence belongs to the ferredoxin--NADP reductase type 2 family. As to quaternary structure, homodimer. It depends on FAD as a cofactor.

It catalyses the reaction 2 reduced [2Fe-2S]-[ferredoxin] + NADP(+) + H(+) = 2 oxidized [2Fe-2S]-[ferredoxin] + NADPH. This is Ferredoxin--NADP reductase from Salinispora arenicola (strain CNS-205).